We begin with the raw amino-acid sequence, 308 residues long: Glutaminase (308 aa).

Residues Ser-66, Asn-117, Glu-161, Asn-168, Tyr-192, Tyr-244, and Val-262 each contribute to the substrate site.

The protein belongs to the glutaminase family. In terms of assembly, homotetramer.

It catalyses the reaction L-glutamine + H2O = L-glutamate + NH4(+). The chain is Glutaminase from Salmonella arizonae (strain ATCC BAA-731 / CDC346-86 / RSK2980).